The following is a 79-amino-acid chain: Protein S100-G (79 aa).

Ser-2 is subject to N-acetylserine. 2 consecutive EF-hand domains span residues 13 to 48 and 45 to 79; these read IFQKYAAKEGDPNQLSKEELKLLIQSEFPSLLKASS and KASSTLDNLFKELDKNGDGEVSYEEFEVFFKKLSQ. Ca(2+) is bound by residues Gln-26 and Glu-31. Residues Ser-42 and Ser-47 each carry the phosphoserine modification. Ca(2+) is bound by residues Asp-58, Asn-60, Asp-62, Glu-64, and Glu-69.

The protein belongs to the S-100 family.

The protein is Protein S100-G (S100g) of Rattus norvegicus (Rat).